Here is a 359-residue protein sequence, read N- to C-terminus: Decorin (359 aa).

An N-terminal signal peptide occupies residues 1–16; the sequence is MKATIILLLLAQVSWA. Positions 17-30 are excised as a propeptide; that stretch reads GPFQQRGLFDFMLE. O-linked (Xyl...) (glycosaminoglycan) serine glycosylation is present at serine 34. 2 disulfide bridges follow: cysteine 54–cysteine 60 and cysteine 58–cysteine 67. 12 LRR repeats span residues 73 to 93, 94 to 117, 118 to 141, 142 to 162, 163 to 186, 187 to 212, 213 to 233, 234 to 257, 258 to 281, 282 to 304, 305 to 334, and 335 to 359; these read DKVP…NNKI, TEIK…NNKI, SKVS…KNQL, KELP…ENEI, TKVR…TNPL, KSSG…DTNI, TSIP…GNKI, SRVD…FNSI, SAVD…NNKL, TRVP…NNNI, SVVG…SNPV, and QYWE…GNYK. Asparagine 211 carries an N-linked (GlcNAc...) asparagine glycan. N-linked (GlcNAc...) asparagine glycosylation is found at asparagine 262 and asparagine 303. A disulfide bridge links cysteine 313 with cysteine 346.

The protein belongs to the small leucine-rich proteoglycan (SLRP) family. SLRP class I subfamily. Binds to type I and type II collagen, fibronectin and TGF-beta. Forms a ternary complex with MFAP2 and ELN. Interacts with DPT. Post-translationally, the attached glycosaminoglycan chain can be either chondroitin sulfate or dermatan sulfate depending upon the tissue of origin. As to expression, detected in placenta (at protein level). Detected in cerebrospinal fluid, fibroblasts and urine (at protein level).

The protein resides in the secreted. Its subcellular location is the extracellular space. It localises to the extracellular matrix. In terms of biological role, may affect the rate of fibrils formation. The polypeptide is Decorin (DCN) (Homo sapiens (Human)).